Here is a 435-residue protein sequence, read N- to C-terminus: GTPase Der (435 aa).

EngA-type G domains follow at residues 4 to 167 (PIVA…SPDA) and 175 to 350 (ISFS…ENKN). GTP is bound by residues 10–17 (GQPNVGKS), 57–61 (DTGGI), 119–122 (NKAD), 181–188 (GRPNVGKS), 228–232 (DTAGI), and 293–296 (NKWD). Residues 351-435 (QRIQSSVLND…PIKILPRKRK (85 aa)) form the KH-like domain.

This sequence belongs to the TRAFAC class TrmE-Era-EngA-EngB-Septin-like GTPase superfamily. EngA (Der) GTPase family. Associates with the 50S ribosomal subunit.

In terms of biological role, GTPase that plays an essential role in the late steps of ribosome biogenesis. The polypeptide is GTPase Der (Lactobacillus delbrueckii subsp. bulgaricus (strain ATCC 11842 / DSM 20081 / BCRC 10696 / JCM 1002 / NBRC 13953 / NCIMB 11778 / NCTC 12712 / WDCM 00102 / Lb 14)).